A 401-amino-acid chain; its full sequence is Large ribosomal subunit protein uL3 (401 aa).

The segment at 1–22 (MSHRKFSAPRHGHMGFTPKKRS) is disordered.

This sequence belongs to the universal ribosomal protein uL3 family.

The protein resides in the cytoplasm. The L3 protein is a component of the large subunit of cytoplasmic ribosomes. This is Large ribosomal subunit protein uL3 (rpl-3) from Caenorhabditis elegans.